Here is a 517-residue protein sequence, read N- to C-terminus: Aldehyde dehydrogenase X, mitochondrial (517 aa).

Residues 1 to 17 constitute a mitochondrion transit peptide; sequence MLRFLAPRLLSLQGRTA. Residue K51 is modified to N6-acetyllysine. Residue K52 is modified to N6-acetyllysine; alternate. At K52 the chain carries N6-succinyllysine; alternate. Residue K81 is modified to N6-succinyllysine. 262 to 267 serves as a coordination point for NAD(+); it reads GSTEVG. Residue E285 is the Proton acceptor of the active site. The Nucleophile role is filled by C319. An N6-acetyllysine; alternate mark is found at K364, K383, K399, K414, and K426. K364, K383, K399, K414, and K426 each carry N6-succinyllysine; alternate. K429 bears the N6-acetyllysine mark.

The protein belongs to the aldehyde dehydrogenase family. In terms of assembly, homotetramer. Liver, testis and to a lesser extent in brain.

Its subcellular location is the mitochondrion matrix. It carries out the reaction an aldehyde + NAD(+) + H2O = a carboxylate + NADH + 2 H(+). It participates in alcohol metabolism; ethanol degradation; acetate from ethanol: step 2/2. In terms of biological role, ALDHs play a major role in the detoxification of alcohol-derived acetaldehyde. They are involved in the metabolism of corticosteroids, biogenic amines, neurotransmitters, and lipid peroxidation. The sequence is that of Aldehyde dehydrogenase X, mitochondrial (ALDH1B1) from Homo sapiens (Human).